The sequence spans 165 residues: Small ribosomal subunit protein uS5 (165 aa).

The S5 DRBM domain occupies 13 to 76 (LEEKVLVVNR…EAARKNLITI (64 aa)).

This sequence belongs to the universal ribosomal protein uS5 family. Part of the 30S ribosomal subunit. Contacts proteins S4 and S8.

Its function is as follows. With S4 and S12 plays an important role in translational accuracy. In terms of biological role, located at the back of the 30S subunit body where it stabilizes the conformation of the head with respect to the body. This Chlamydia caviae (strain ATCC VR-813 / DSM 19441 / 03DC25 / GPIC) (Chlamydophila caviae) protein is Small ribosomal subunit protein uS5.